A 245-amino-acid chain; its full sequence is Probable metal transport system ATP-binding protein CPn_0542/CP_0210/CPj0542/CpB0563 (245 aa).

Residues 5–240 form the ABC transporter domain; it reads ILAEGLAFRY…CCHPYKNQEF (236 aa). 39–46 contributes to the ATP binding site; that stretch reads GPNGGGKS.

Belongs to the ABC transporter superfamily.

Its subcellular location is the cell inner membrane. Functionally, part of an ATP-driven transport system CPn0541/CPn0542/CPn0543 for a metal. Probably responsible for energy coupling to the transport system. This is Probable metal transport system ATP-binding protein CPn_0542/CP_0210/CPj0542/CpB0563 from Chlamydia pneumoniae (Chlamydophila pneumoniae).